The following is a 389-amino-acid chain: Lipid-A-disaccharide synthase (389 aa).

The protein belongs to the LpxB family.

The enzyme catalyses a lipid X + a UDP-2-N,3-O-bis[(3R)-3-hydroxyacyl]-alpha-D-glucosamine = a lipid A disaccharide + UDP + H(+). The protein operates within bacterial outer membrane biogenesis; LPS lipid A biosynthesis. Its function is as follows. Condensation of UDP-2,3-diacylglucosamine and 2,3-diacylglucosamine-1-phosphate to form lipid A disaccharide, a precursor of lipid A, a phosphorylated glycolipid that anchors the lipopolysaccharide to the outer membrane of the cell. The protein is Lipid-A-disaccharide synthase of Paraburkholderia phymatum (strain DSM 17167 / CIP 108236 / LMG 21445 / STM815) (Burkholderia phymatum).